Consider the following 448-residue polypeptide: tRNA(Ile)-lysidine synthase (448 aa).

25–30 contacts ATP; that stretch reads SGGSDS.

This sequence belongs to the tRNA(Ile)-lysidine synthase family.

Its subcellular location is the cytoplasm. It catalyses the reaction cytidine(34) in tRNA(Ile2) + L-lysine + ATP = lysidine(34) in tRNA(Ile2) + AMP + diphosphate + H(+). Functionally, ligates lysine onto the cytidine present at position 34 of the AUA codon-specific tRNA(Ile) that contains the anticodon CAU, in an ATP-dependent manner. Cytidine is converted to lysidine, thus changing the amino acid specificity of the tRNA from methionine to isoleucine. The chain is tRNA(Ile)-lysidine synthase from Brucella canis (strain ATCC 23365 / NCTC 10854 / RM-666).